The primary structure comprises 322 residues: Heat-inducible transcription repressor HrcA (322 aa).

The protein belongs to the HrcA family.

In terms of biological role, negative regulator of class I heat shock genes (grpE-dnaK-dnaJ and groELS operons). Prevents heat-shock induction of these operons. The protein is Heat-inducible transcription repressor HrcA of Staphylococcus carnosus (strain TM300).